Reading from the N-terminus, the 277-residue chain is Undecaprenyl-diphosphatase 1 (277 aa).

8 consecutive transmembrane segments (helical) span residues 1–21 (MSLLEAVILGLVQGITEFLPI), 39–58 (AGFSFEILLHLASVLAVILY), 85–105 (FWFAIYLVVATGITGVAGILF), 113–133 (FKAPIFIALALAVTGLFLIII), 147–167 (MTIWDSIIVGLGQCLALIPGL), 191–211 (SFLLSIPVILGSSVLAIDDLI), 226–246 (ASFVVTFIASWLGIVFFLNLV), and 251–271 (LVYFAVYCFIVAILVFIFQDA).

This sequence belongs to the UppP family.

The protein resides in the cell membrane. It catalyses the reaction di-trans,octa-cis-undecaprenyl diphosphate + H2O = di-trans,octa-cis-undecaprenyl phosphate + phosphate + H(+). Catalyzes the dephosphorylation of undecaprenyl diphosphate (UPP). Confers resistance to bacitracin. The sequence is that of Undecaprenyl-diphosphatase 1 from Shouchella clausii (strain KSM-K16) (Alkalihalobacillus clausii).